Consider the following 476-residue polypeptide: ATP synthase subunit beta (476 aa).

An ATP-binding site is contributed by 154–161 (GGAGVGKT).

The protein belongs to the ATPase alpha/beta chains family. As to quaternary structure, F-type ATPases have 2 components, CF(1) - the catalytic core - and CF(0) - the membrane proton channel. CF(1) has five subunits: alpha(3), beta(3), gamma(1), delta(1), epsilon(1). CF(0) has four main subunits: a(1), b(1), b'(1) and c(9-12).

The protein resides in the cell inner membrane. It carries out the reaction ATP + H2O + 4 H(+)(in) = ADP + phosphate + 5 H(+)(out). Produces ATP from ADP in the presence of a proton gradient across the membrane. The catalytic sites are hosted primarily by the beta subunits. The protein is ATP synthase subunit beta of Rhodopseudomonas palustris (strain ATCC BAA-98 / CGA009).